The sequence spans 164 residues: uncharacterized protein (164 aa).

In terms of domain architecture, HTH marR-type spans 28-157 (EAEILYQLQG…LIDVLARMRN (130 aa)). The segment at residues 71–94 (QSDLQKKVNIDSAAVTRHLKQLES) is a DNA-binding region (H-T-H motif).

This is an uncharacterized protein from Bacillus subtilis (strain 168).